A 470-amino-acid chain; its full sequence is Membrane-bound lytic murein transglycosylase F (470 aa).

The first 24 residues, 1–24 (MPSLKTKGAAGKFASLLLVLALSA), serve as a signal peptide directing secretion. The segment at 25–262 (CSRPAPPPET…RALERYFGHV (238 aa)) is non-LT domain. The segment at 263 to 470 (KRLGSSDILG…RGEDGLPPPG (208 aa)) is LT domain. Glu309 is an active-site residue.

This sequence in the N-terminal section; belongs to the bacterial solute-binding protein 3 family. In the C-terminal section; belongs to the transglycosylase Slt family.

It is found in the cell outer membrane. The enzyme catalyses Exolytic cleavage of the (1-&gt;4)-beta-glycosidic linkage between N-acetylmuramic acid (MurNAc) and N-acetylglucosamine (GlcNAc) residues in peptidoglycan, from either the reducing or the non-reducing ends of the peptidoglycan chains, with concomitant formation of a 1,6-anhydrobond in the MurNAc residue.. In terms of biological role, murein-degrading enzyme that degrades murein glycan strands and insoluble, high-molecular weight murein sacculi, with the concomitant formation of a 1,6-anhydromuramoyl product. Lytic transglycosylases (LTs) play an integral role in the metabolism of the peptidoglycan (PG) sacculus. Their lytic action creates space within the PG sacculus to allow for its expansion as well as for the insertion of various structures such as secretion systems and flagella. This Thiobacillus denitrificans (strain ATCC 25259 / T1) protein is Membrane-bound lytic murein transglycosylase F.